The sequence spans 334 residues: Methionine import ATP-binding protein MetN (334 aa).

The ABC transporter domain maps to 7–246 (VEFRSVSKVF…PRSAPARAFV (240 aa)). 43 to 50 (GYSGAGKS) contributes to the ATP binding site.

Belongs to the ABC transporter superfamily. Methionine importer (TC 3.A.1.24) family. As to quaternary structure, the complex is composed of two ATP-binding proteins (MetN), two transmembrane proteins (MetI) and a solute-binding protein (MetQ).

The protein localises to the cell membrane. It catalyses the reaction L-methionine(out) + ATP + H2O = L-methionine(in) + ADP + phosphate + H(+). The enzyme catalyses D-methionine(out) + ATP + H2O = D-methionine(in) + ADP + phosphate + H(+). Part of the ABC transporter complex MetNIQ involved in methionine import. Responsible for energy coupling to the transport system. This is Methionine import ATP-binding protein MetN from Nocardia farcinica (strain IFM 10152).